The primary structure comprises 465 residues: Argininosuccinate lyase (465 aa).

It belongs to the lyase 1 family. Argininosuccinate lyase subfamily.

The protein resides in the cytoplasm. It carries out the reaction 2-(N(omega)-L-arginino)succinate = fumarate + L-arginine. The protein operates within amino-acid biosynthesis; L-arginine biosynthesis; L-arginine from L-ornithine and carbamoyl phosphate: step 3/3. This chain is Argininosuccinate lyase, found in Aromatoleum aromaticum (strain DSM 19018 / LMG 30748 / EbN1) (Azoarcus sp. (strain EbN1)).